A 742-amino-acid chain; its full sequence is Synaptic vesicle glycoprotein 2A (742 aa).

Residues 1 to 57 form an interaction with SYT1 region; that stretch reads MEEGFRDRAAFIRGAKDIAKEVKKHAAKKVVKGLDRVQDEYSRRSYSRFEEEDDDDD. Residues 1–169 are Cytoplasmic-facing; it reads MEEGFRDRAA…GHGRFQWTLY (169 aa). The span at 33–49 shows a compositional bias: basic and acidic residues; sequence GLDRVQDEYSRRSYSRF. Residues 33 to 144 are disordered; it reads GLDRVQDEYS…GRGEAQRRKE (112 aa). 2 positions are modified to phosphoserine: Ser-80 and Ser-81. Residue Thr-84 is modified to Phosphothreonine. Over residues 122–137 the composition is skewed to gly residues; that stretch reads VRGGLSDGEGPPGGRG. Ser-127 is subject to Phosphoserine. A helical membrane pass occupies residues 170–190; that stretch reads FVLGLALMADGVEVFVVGFVL. At 191 to 205 the chain is on the extracellular side; sequence PSAEKDMCLSDSNKG. Residues 206–226 traverse the membrane as a helical segment; the sequence is MLGLIVYLGMMVGAFLWGGLA. Residues 227–233 lie on the Cytoplasmic side of the membrane; the sequence is DRLGRRQ. Residues 234–254 traverse the membrane as a helical segment; that stretch reads CLLISLSVNSVFAFFSSFVQG. Topologically, residues 255 to 262 are extracellular; the sequence is YGTFLFCR. Residues 263–283 form a helical membrane-spanning segment; sequence LLSGVGIGGSIPIVFSYFSEF. The Cytoplasmic portion of the chain corresponds to 284 to 294; that stretch reads LAQEKRGEHLS. Residues 295 to 315 form a helical membrane-spanning segment; that stretch reads WLCMFWMIGGVYAAAMAWAII. At 316 to 334 the chain is on the extracellular side; the sequence is PHYGWSFQMGSAYQFHSWR. The helical transmembrane segment at 335 to 355 threads the bilayer; that stretch reads VFVLVCAFPSVFAIGALTTQP. The Cytoplasmic segment spans residues 356–447; sequence ESPRFFLENG…CFGPEYRRIT (92 aa). Ser-393 carries the phosphoserine modification. Residues 448–468 form a helical membrane-spanning segment; it reads LMMMGVWFTMSFSYYGLTVWF. The Extracellular segment spans residues 469–598; it reads PDMIRHLQAV…GTGEGAYMVY (130 aa). Tyr-480 is subject to Phosphotyrosine. Asn-498, Asn-548, and Asn-573 each carry an N-linked (GlcNAc...) asparagine glycan. A helical transmembrane segment spans residues 599-619; sequence FVSFLGTLAVLPGNIVSALLM. Topologically, residues 620–626 are cytoplasmic; the sequence is DKIGRLR. The chain crosses the membrane as a helical span at residues 627–647; the sequence is MLAGSSVMSCVSCFFLSFGNS. At 648-651 the chain is on the extracellular side; that stretch reads ESAM. Residues 652–672 form a helical membrane-spanning segment; that stretch reads IALLCLFGGVSIASWNALDVL. The Cytoplasmic portion of the chain corresponds to 673 to 685; sequence TVELYPSDKRTTA. A helical membrane pass occupies residues 686–708; sequence FGFLNALCKLAAVLGISIFTSFV. Over 709 to 712 the chain is Extracellular; the sequence is GITK. A helical transmembrane segment spans residues 713–731; sequence AAPILFASAALALGSSLAL. Over 732 to 742 the chain is Cytoplasmic; it reads KLPETRGQVLQ.

The protein belongs to the major facilitator superfamily. Interacts with SYT1/synaptotagmin-1 in a calcium-dependent manner. Binds the adapter protein complex AP-2. In terms of assembly, (Microbial infection) Interacts with C.botulinum neurotoxin type A2 (BoNT/A, botA). Interaction is improved by glycosylation of SV2. Phosphorylation by CK1 of the N-terminal cytoplasmic domain regulates interaction with SYT1. Post-translationally, N-glycosylated.

The protein localises to the presynapse. It localises to the cytoplasmic vesicle. It is found in the secretory vesicle. Its subcellular location is the synaptic vesicle membrane. Its function is as follows. Plays a role in the control of regulated secretion in neural and endocrine cells, enhancing selectively low-frequency neurotransmission. Positively regulates vesicle fusion by maintaining the readily releasable pool of secretory vesicles. In terms of biological role, (Microbial infection) Receptor for the C.botulinum neurotoxin type A2 (BoNT/A, botA); glycosylation is not essential but enhances the interaction. Probably also serves as a receptor for the closely related C.botulinum neurotoxin type A1. This is Synaptic vesicle glycoprotein 2A (SV2A) from Homo sapiens (Human).